The following is a 651-amino-acid chain: Peptide-N(4)-(N-acetyl-beta-glucosaminyl)asparagine amidase (651 aa).

Residues 29-90 (EASRLLLTYA…EGETHMVFPK (62 aa)) enclose the PUB domain. Positions 246, 249, 279, and 282 each coordinate Zn(2+). Cys-305 acts as the Nucleophile in catalysis. Active-site residues include His-332 and Asp-349. The region spanning 450–651 (EFGGRTSGSM…LEMIIKLADL (202 aa)) is the PAW domain.

This sequence belongs to the transglutaminase-like superfamily. PNGase family. It depends on Zn(2+) as a cofactor.

It localises to the cytoplasm. It carries out the reaction Hydrolysis of an N(4)-(acetyl-beta-D-glucosaminyl)asparagine residue in which the glucosamine residue may be further glycosylated, to yield a (substituted) N-acetyl-beta-D-glucosaminylamine and a peptide containing an aspartate residue.. Specifically deglycosylates the denatured form of N-linked glycoproteins in the cytoplasm and assists their proteasome-mediated degradation. Cleaves the beta-aspartyl-glucosamine (GlcNAc) of the glycan and the amide side chain of Asn, converting Asn to Asp. Prefers proteins containing high-mannose over those bearing complex type oligosaccharides. Can recognize misfolded proteins in the endoplasmic reticulum that are exported to the cytosol to be destroyed and deglycosylate them, while it has no activity toward native proteins. Deglycosylation is a prerequisite for subsequent proteasome-mediated degradation of some, but not all, misfolded glycoproteins. The chain is Peptide-N(4)-(N-acetyl-beta-glucosaminyl)asparagine amidase (NGLY1) from Gallus gallus (Chicken).